The primary structure comprises 141 residues: Transcription antitermination protein NusB (141 aa).

This sequence belongs to the NusB family.

Involved in transcription antitermination. Required for transcription of ribosomal RNA (rRNA) genes. Binds specifically to the boxA antiterminator sequence of the ribosomal RNA (rrn) operons. The sequence is that of Transcription antitermination protein NusB from Neisseria meningitidis serogroup B (strain ATCC BAA-335 / MC58).